The sequence spans 483 residues: Regulatory protein ViaA (483 aa).

This sequence belongs to the ViaA family. Homodimer. Interacts with RavA.

The protein localises to the cytoplasm. Functionally, component of the RavA-ViaA chaperone complex, which may act on the membrane to optimize the function of some of the respiratory chains. ViaA stimulates the ATPase activity of RavA. The protein is Regulatory protein ViaA of Escherichia coli O127:H6 (strain E2348/69 / EPEC).